A 504-amino-acid chain; its full sequence is L-carnitine/gamma-butyrobetaine antiporter (504 aa).

The next 12 membrane-spanning stretches (helical) occupy residues 10–30 (MEPK…WLTV), 51–71 (WGWA…WLVF), 92–112 (IFMM…SIEI), 143–163 (GPLP…FFFV), 195–215 (FYLV…TPLV), 231–251 (LDAI…ACGL), 263–283 (SYLS…SFIM), 316–336 (WSVF…IFLA), 347–367 (LCFG…TVLG), 398–418 (WAAL…CFIA), 446–466 (LLVR…LLAL), and 475–495 (AIIA…LSFI).

It belongs to the BCCT transporter (TC 2.A.15) family. CaiT subfamily. As to quaternary structure, homotrimer.

The protein resides in the cell inner membrane. It catalyses the reaction 4-(trimethylamino)butanoate(in) + (R)-carnitine(out) = 4-(trimethylamino)butanoate(out) + (R)-carnitine(in). The protein operates within amine and polyamine metabolism; carnitine metabolism. Its function is as follows. Catalyzes the exchange of L-carnitine for gamma-butyrobetaine. The protein is L-carnitine/gamma-butyrobetaine antiporter of Shigella dysenteriae serotype 1 (strain Sd197).